Reading from the N-terminus, the 549-residue chain is Mitochondrial hydroperoxide bicyclase CYP50918A1 (549 aa).

Residues 1 to 75 form a disordered region; that stretch reads MPDAFDVSDD…PQGNRKPAVL (75 aa). A compositionally biased stretch (basic and acidic residues) spans 8 to 26; the sequence is SDDKQLVDQQLTRDSDSKP. Low complexity predominate over residues 27–41; that stretch reads AAKPASKQKPPSKVP. Cys-491 lines the heme pocket. Residues 528–549 form a disordered region; the sequence is DTGDHGPPNGKFSVIKPRQPKH.

It belongs to the cytochrome P450 family. It depends on heme as a cofactor.

Its subcellular location is the mitochondrion. The catalysed reaction is (13S)-hydroperoxy-(9Z,11E,15Z)-octadecatrienoate = plasmodiophorol A. It carries out the reaction (13S)-hydroperoxy-(9Z,11E,15Z)-octadecatrienoate = plasmodiophorol B. Its pathway is lipid metabolism; oxylipin biosynthesis. Functionally, cytochrome P450 hydroperoxide bicyclase involved in the metabolism of oxylipins natural products such as egregiachlorides, hybridalactone, ecklonialactones and related bicyclic oxylipins. Isomerizes the hydroperoxides into epoxyalcohols via epoxyallylic radical. Can use alpha-linolenic 13-hydroperoxide ((9Z,11E,13S,15Z)-13-hydroperoxy-9,11,15-octadecatrienoic, 13-HPOT) as preferred substrate to produce the heterobicyclic oxylipins plasmodiophorol A (6-oxabicyclo[3.1.0]hexane) and plasmodiophorol B (2-oxabicyclo[2.2.1]heptane) at the ratio 12:1 and a minor product plasmodiophorol C (cyclopentanediol) formed through the hydrolysis of plasmodiophorols A and B and, to a lower extent, active with linoleic acid 13-hydroperoxide ((9Z,11E,13S)-13-hydroperoxy-9,11-octadecadienoic, 13-HPOD), linoleic acid 9-hydroperoxide ((9S,10E,12Z)-9-hydroperoxy-10,12-octadecadienoic, 9-HPOD) and alpha-linolenic 9-hydroperoxide ((9S,10E,12Z,15Z)-9-hydroperoxy-10,12,15-octadecatrienoic, 9-HPOT). The chain is Mitochondrial hydroperoxide bicyclase CYP50918A1 from Plasmodiophora brassicae (Clubroot disease agent).